Reading from the N-terminus, the 485-residue chain is Glutathione gamma-glutamylcysteinyltransferase 1 (485 aa).

The 221-residue stretch at 1–221 folds into the Peptidase C83 domain; it reads MAMASLYRRS…GFMLISRPHR (221 aa). Active-site residues include Cys56, His162, and Asp180.

This sequence belongs to the phytochelatin synthase family. In terms of tissue distribution, expressed in roots and shoots.

The catalysed reaction is [Glu(-Cys)](n)-Gly + glutathione + H(+) = [Glu(-Cys)](n+1)-Gly + glycine. Requires cadmium for activity. Also activated in vitro or in heterologous system by Ag(+), Hg(+), Zn(2+), Cu(2+), Fe(2+) or Fe(3+) ions, but not by Co(2+) or Ni(2+) ions. In terms of biological role, involved in the synthesis of phytochelatins (PC) and homophytochelatins (hPC), the heavy-metal-binding peptides of plants. Also involved in glutathione-conjugates degradation. In Arabidopsis thaliana (Mouse-ear cress), this protein is Glutathione gamma-glutamylcysteinyltransferase 1 (PCS1).